Consider the following 524-residue polypeptide: MVKILVTDPLHEDAIKILEEVGEVEVATGLTKEELLEKIKDADVLVVRSGTKVTRDVIEKAEKLKVIGRAGVGVDNIDVEAATEKGIIVVNAPDASSISVAELTMGLMLAAARNIPQATASLKRGEWDRKRFKGIELYGKTLGVIGLGRIGQQVVKRAKAFGMNIIGYDPYIPKEVAESMGVELVDDINELCKRADFITLHVPLTPKTRHIIGREQIALMKKNAIIVNCARGGLIDEKALYEALKEGKIRAAALDVFEEEPPKDNPLLTLDNVIGTPHQGASTEEAQKAAGTIVAEQIKKVLRGELAENVVNMPNIPQEKLGKLKPYMLLAEMLGNIVMQVLDGSVNRVELIYSGELAKEKTDLIKRAFLKGLLSPILLAGINLVNAPIIAKNRNINVVESSTSEEKYGNAIKITAESDKKKFSIVGAIINNKPVILEVDGYEVSFIPEGVLAIIKHIDRPGTIGRVCITLGDYGINIASMQVGRKEPGGESVMLLNLDHTVPEEVIEKIKEIPNIKDVAVINL.

Residues 149–150 (RI), Asp169, 229–231 (CAR), and Asp255 contribute to the NAD(+) site. The active site involves Arg231. Glu260 is a catalytic residue. His278 acts as the Proton donor in catalysis. 278-281 (HQGA) contacts NAD(+). Residues 452–524 (LAIIKHIDRP…NIKDVAVINL (73 aa)) form the ACT domain.

The protein belongs to the D-isomer specific 2-hydroxyacid dehydrogenase family.

It carries out the reaction (2R)-3-phosphoglycerate + NAD(+) = 3-phosphooxypyruvate + NADH + H(+). The protein operates within amino-acid biosynthesis; L-serine biosynthesis; L-serine from 3-phospho-D-glycerate: step 1/3. This Methanocaldococcus jannaschii (strain ATCC 43067 / DSM 2661 / JAL-1 / JCM 10045 / NBRC 100440) (Methanococcus jannaschii) protein is D-3-phosphoglycerate dehydrogenase (serA).